The sequence spans 270 residues: MNPQCARCGKVVYPTEKVNCLDKYWHKGCFHCEVCKMALNMNNYKGYEKKPYCNAHYPKQSFTTVADTPENLRLKQQSELQSQVKYKRDFEESKGRGFSIVTDTPELQRLKRTQEQISNVKYHEDFEKTKGRGFTPVVDDPVTERVRKSTQVVSDAAYKGVQPHVVEMDRRPGIIVAPVLPGAYQQSHSQGYGYMHQTSVSSMRSMQPPAHLRTYRAMYDYSAQDEDEVSFRDGDYIVNVQPIDDGWMYGTVQRTGRTGMLPANYIEFVN.

The LIM zinc-binding domain occupies 3 to 63 (PQCARCGKVV…NAHYPKQSFT (61 aa)). A Nebulin 1 repeat occupies 61–95 (SFTTVADTPENLRLKQQSELQSQVKYKRDFEESKG). An Omega-N-methylarginine modification is found at R96. Residues 97 to 131 (GFSIVTDTPELQRLKRTQEQISNVKYHEDFEKTKG) form a Nebulin 2 repeat. R132 is modified (omega-N-methylarginine). A Nebulin 3 repeat occupies 133 to 159 (GFTPVVDDPVTERVRKSTQVVSDAAYK). At T135 the chain carries Phosphothreonine. The region spanning 210 to 270 (AHLRTYRAMY…LPANYIEFVN (61 aa)) is the SH3 domain. Position 230 is a phosphoserine (S230).

It localises to the cytoplasm. Functionally, binds to actin and plays an important role in the assembly of the Z-disk. Isoform 2 might play a role in the assembly of focal adhesion. The chain is LIM zinc-binding domain-containing Nebulette (Nebl) from Mus musculus (Mouse).